The chain runs to 170 residues: Probable T4-type lysozyme 1 (170 aa).

The Proton donor role is filled by glutamate 13. Residue aspartate 22 is the Nucleophile of the active site.

This sequence belongs to the glycosyl hydrolase 24 family.

It catalyses the reaction Hydrolysis of (1-&gt;4)-beta-linkages between N-acetylmuramic acid and N-acetyl-D-glucosamine residues in a peptidoglycan and between N-acetyl-D-glucosamine residues in chitodextrins.. The protein is Probable T4-type lysozyme 1 of Dictyostelium discoideum (Social amoeba).